Consider the following 711-residue polypeptide: 1,4-alpha-glucan branching enzyme GlgB (711 aa).

The Nucleophile role is filled by aspartate 392. Glutamate 443 (proton donor) is an active-site residue.

This sequence belongs to the glycosyl hydrolase 13 family. GlgB subfamily. In terms of assembly, monomer.

The enzyme catalyses Transfers a segment of a (1-&gt;4)-alpha-D-glucan chain to a primary hydroxy group in a similar glucan chain.. Its pathway is glycan biosynthesis; glycogen biosynthesis. In terms of biological role, catalyzes the formation of the alpha-1,6-glucosidic linkages in glycogen by scission of a 1,4-alpha-linked oligosaccharide from growing alpha-1,4-glucan chains and the subsequent attachment of the oligosaccharide to the alpha-1,6 position. The sequence is that of 1,4-alpha-glucan branching enzyme GlgB from Corynebacterium jeikeium (strain K411).